A 265-amino-acid chain; its full sequence is Probable ribose-5-phosphate isomerase 2 (265 aa).

Alanine 2 carries the N-acetylalanine modification. Serine 96 bears the Phosphoserine mark.

The protein belongs to the ribose 5-phosphate isomerase family.

Its subcellular location is the cytoplasm. The catalysed reaction is aldehydo-D-ribose 5-phosphate = D-ribulose 5-phosphate. The protein operates within carbohydrate degradation; pentose phosphate pathway; D-ribose 5-phosphate from D-ribulose 5-phosphate (non-oxidative stage): step 1/1. In terms of biological role, catalyzes the reversible conversion of ribose-5-phosphate to ribulose 5-phosphate. The protein is Probable ribose-5-phosphate isomerase 2 (RPI2) of Arabidopsis thaliana (Mouse-ear cress).